We begin with the raw amino-acid sequence, 212 residues long: Adenine phosphoribosyltransferase (212 aa).

This sequence belongs to the purine/pyrimidine phosphoribosyltransferase family. As to quaternary structure, homodimer.

It is found in the cytoplasm. The enzyme catalyses AMP + diphosphate = 5-phospho-alpha-D-ribose 1-diphosphate + adenine. Its pathway is purine metabolism; AMP biosynthesis via salvage pathway; AMP from adenine: step 1/1. Functionally, catalyzes a salvage reaction resulting in the formation of AMP, that is energically less costly than de novo synthesis. The chain is Adenine phosphoribosyltransferase from Mycobacterium tuberculosis (strain ATCC 25618 / H37Rv).